Here is a 562-residue protein sequence, read N- to C-terminus: Oxygen-dependent choline dehydrogenase (562 aa).

FAD is bound at residue 4–33 (DYIIIGAGSAGNVLATRLTEDPNTTVLLLE). The Proton acceptor role is filled by His-473.

Belongs to the GMC oxidoreductase family. Requires FAD as cofactor.

The catalysed reaction is choline + A = betaine aldehyde + AH2. The enzyme catalyses betaine aldehyde + NAD(+) + H2O = glycine betaine + NADH + 2 H(+). The protein operates within amine and polyamine biosynthesis; betaine biosynthesis via choline pathway; betaine aldehyde from choline (cytochrome c reductase route): step 1/1. Involved in the biosynthesis of the osmoprotectant glycine betaine. Catalyzes the oxidation of choline to betaine aldehyde and betaine aldehyde to glycine betaine at the same rate. This is Oxygen-dependent choline dehydrogenase from Escherichia coli (strain SMS-3-5 / SECEC).